Consider the following 393-residue polypeptide: Serine/threonine-protein phosphatase 2A activator 1 (393 aa).

The interval 328-393 (EKEEESIEQA…TSFSRDRLRR (66 aa)) is disordered. Polar residues-rich tracts occupy residues 335-356 (EQANAGSPGREQTSTRFPTSTS) and 365-386 (SGNNINYLLSHQNQSHRNQTSF). A Phosphoserine modification is found at serine 341.

The protein belongs to the PTPA-type PPIase family. In terms of assembly, interacts with the phosphatase PP2A-like catalytic subunits PPG1, PPH3 and SIT4. Forms a ternary complex with SIT4-TAP42.

The protein localises to the cytoplasm. It is found in the nucleus. The enzyme catalyses [protein]-peptidylproline (omega=180) = [protein]-peptidylproline (omega=0). In terms of biological role, PPIases accelerate the folding of proteins. It catalyzes the cis-trans isomerization of proline imidic peptide bonds in oligopeptides. Acts as a regulatory subunit for TAP42-associated PP2A-like phosphatases modulating their activity or substrate specificity, probably by inducing a conformational change in the catalytic subunit, a direct target of the PPIase. Can reactivate inactive phosphatase PP2A-phosphatase methylesterase complexes (PP2Ai) in presence of ATP and Mg(2+) by dissociating the inactive form from the complex. Involved in the regulation of cell cycle progression, mitotic spindle formation, bud morphogenesis and DNA repair. The protein is Serine/threonine-protein phosphatase 2A activator 1 (RRD1) of Saccharomyces cerevisiae (strain ATCC 204508 / S288c) (Baker's yeast).